The chain runs to 212 residues: Probable GTP-binding protein EngB (212 aa).

The 173-residue stretch at Ser-38–Phe-210 folds into the EngB-type G domain. GTP-binding positions include Gly-46 to Ser-53, Gly-73 to Gln-77, Asp-91 to Gly-94, Thr-158 to Asp-161, and Val-189 to Asn-191. Residues Ser-53 and Thr-75 each coordinate Mg(2+).

It belongs to the TRAFAC class TrmE-Era-EngA-EngB-Septin-like GTPase superfamily. EngB GTPase family. Mg(2+) serves as cofactor.

In terms of biological role, necessary for normal cell division and for the maintenance of normal septation. In Rickettsia rickettsii (strain Sheila Smith), this protein is Probable GTP-binding protein EngB.